The primary structure comprises 519 residues: Galactan beta-1,4-galactosyltransferase GALS2 (519 aa).

The chain crosses the membrane as a helical span at residues 28 to 48 (LALMALLVLCTLATLLPFLPS). Positions 257-471 (DYLYCGSSLY…YHGSISQRRE (215 aa)) constitute a GT92 domain.

It belongs to the glycosyltransferase 92 family. Expressed in the midrib of mature leaves, root vasculature, flower filaments, siliques and seeds.

The protein resides in the golgi apparatus membrane. Functionally, involved in the biosynthesis of beta-1,4-galactan. Beta-1,4-galactans are abundant polysaccharides in plant cell walls and are found as side-chain of rhamnogalacturonan I, which is a major component of pectin. This is Galactan beta-1,4-galactosyltransferase GALS2 from Arabidopsis thaliana (Mouse-ear cress).